The chain runs to 296 residues: Pantothenate synthetase (296 aa).

31–38 (MGYLHEGH) serves as a coordination point for ATP. The Proton donor role is filled by H38. Q62 serves as a coordination point for (R)-pantoate. Position 62 (Q62) interacts with beta-alanine. Position 148–151 (148–151 (GEKD)) interacts with ATP. Residue Q154 participates in (R)-pantoate binding. ATP-binding positions include V177 and 185 to 188 (LSSR).

This sequence belongs to the pantothenate synthetase family. Homodimer.

The protein resides in the cytoplasm. It catalyses the reaction (R)-pantoate + beta-alanine + ATP = (R)-pantothenate + AMP + diphosphate + H(+). It participates in cofactor biosynthesis; (R)-pantothenate biosynthesis; (R)-pantothenate from (R)-pantoate and beta-alanine: step 1/1. Catalyzes the condensation of pantoate with beta-alanine in an ATP-dependent reaction via a pantoyl-adenylate intermediate. In Deinococcus geothermalis (strain DSM 11300 / CIP 105573 / AG-3a), this protein is Pantothenate synthetase.